Consider the following 776-residue polypeptide: MAISTMLGSISCCPSPKGYEMVKQHSVRLKHCVFTVKSSVPVYSEGVNDGIKLHSFGNLVKKKVFLDTSKRFYFQGRWSESSGRRVETYAGVDVASAVDVINDLGFDTLTFLMVTVIIVPAFRILKASPILGFFFAGVVLNQFGLIRNLTDVKVLSEWGILFLLFEMGLELSLARLKALAKFAFGMGLTQVLLCTAAFTAFELPPNGAIGTKILEFLFHSRPDLVNIRSIDEAVVIGAALSLSSSAFVLQLLAEKGELPTRFGSATLGILLLQDIAVVPLLVILPVLESQDIGGESIWPMLAKESAKALGGLGILSLGGKFFLRRIFEVVAETRSSEAFVALCLLTVAGTSLVTQWLGFSDTLGAFLAGALLAETNFRTQIEADIRPFRGLLLGLFFVTTGTSIDMEVLFREWPNVLSLLGGLIVIKTLIITAIGPRVGLTIQESVRVGFLLSQGGEFAFVVFSLANRLGVLPNELNKLLIIVVVLSMALTPYLNQLGRKAADFLDERLDPGEKIGEDVNFDVSESIVIIGFGQMGQVLANFLSTPLVSDSDLVGWPYIGFDLNPAVVKESRKLGFPILYGDGSRPSVLQSAGVSSPKAIMIMYKGKKRTTEAVQRLRLAFPGSPIYARAQDLPHLLELKKAGATDAILENAETSLQLGSKLLTGFGVMSDDVSFLSKVFRDSMEIQAQEEITASETNAGLKPMQMKASDINVVSAATQKQVQLMKPMQMKASDSNSDSAAEILQETAGLSQPPEIDDSSVNIDNGFVGKADKAQD.

The N-terminal 72 residues, 1–72 (MAISTMLGSI…KVFLDTSKRF (72 aa)), are a transit peptide targeting the chloroplast. At 73-93 (YFQGRWSESSGRRVETYAGVD) the chain is on the lumenal, thylakoid side. A helical transmembrane segment spans residues 94 to 114 (VASAVDVINDLGFDTLTFLMV). A topological domain (stromal) is located at residue Thr115. The helical transmembrane segment at 116-136 (VIIVPAFRILKASPILGFFFA) threads the bilayer. Residues 137–153 (GVVLNQFGLIRNLTDVK) are Lumenal, thylakoid-facing. The helical transmembrane segment at 154 to 174 (VLSEWGILFLLFEMGLELSLA) threads the bilayer. Topologically, residues 175–181 (RLKALAK) are stromal. A helical membrane pass occupies residues 182-202 (FAFGMGLTQVLLCTAAFTAFE). The Lumenal, thylakoid segment spans residues 203 to 232 (LPPNGAIGTKILEFLFHSRPDLVNIRSIDE). A helical transmembrane segment spans residues 233-253 (AVVIGAALSLSSSAFVLQLLA). Topologically, residues 254–266 (EKGELPTRFGSAT) are stromal. The chain crosses the membrane as a helical span at residues 267–287 (LGILLLQDIAVVPLLVILPVL). The Lumenal, thylakoid portion of the chain corresponds to 288–296 (ESQDIGGES). The helical transmembrane segment at 297-317 (IWPMLAKESAKALGGLGILSL) threads the bilayer. Over 318–338 (GGKFFLRRIFEVVAETRSSEA) the chain is Stromal. The helical transmembrane segment at 339–359 (FVALCLLTVAGTSLVTQWLGF) threads the bilayer. Topologically, residues 360-389 (SDTLGAFLAGALLAETNFRTQIEADIRPFR) are lumenal, thylakoid. A helical membrane pass occupies residues 390–410 (GLLLGLFFVTTGTSIDMEVLF). Over 411-415 (REWPN) the chain is Stromal. The chain crosses the membrane as a helical span at residues 416–436 (VLSLLGGLIVIKTLIITAIGP). Residues 437–445 (RVGLTIQES) lie on the Lumenal, thylakoid side of the membrane. Residues 446-466 (VRVGFLLSQGGEFAFVVFSLA) traverse the membrane as a helical segment. Topologically, residues 467-468 (NR) are stromal. Residues 469 to 489 (LGVLPNELNKLLIIVVVLSMA) traverse the membrane as a helical segment. Topologically, residues 490–526 (LTPYLNQLGRKAADFLDERLDPGEKIGEDVNFDVSES) are lumenal, thylakoid. Residues 524–649 (SESIVIIGFG…KKAGATDAIL (126 aa)) enclose the RCK N-terminal domain. The helical transmembrane segment at 527–547 (IVIIGFGQMGQVLANFLSTPL) threads the bilayer. At 548-776 (VSDSDLVGWP…FVGKADKAQD (229 aa)) the chain is on the stromal side. The disordered stretch occupies residues 728-776 (MQMKASDSNSDSAAEILQETAGLSQPPEIDDSSVNIDNGFVGKADKAQD).

This sequence belongs to the monovalent cation:proton antiporter 2 (CPA2) transporter (TC 2.A.37) family. KEA (TC 2.A.37.1) subfamily. As to expression, expressed at low levels in flowers, siliques and leaves. Expressed at low levels in flowers and leaves. In terms of tissue distribution, most abundant splice form in all organs, including siliques, flowers, leaves and roots. Preferentially expressed in photosynthetically active tissues, including seedling cotyledons and mature leaves. As to expression, expressed in shoots and roots.

The protein localises to the plastid. It localises to the chloroplast membrane. Its subcellular location is the golgi apparatus membrane. It is found in the chloroplast thylakoid membrane. The enzyme catalyses K(+)(in) + H(+)(out) = K(+)(out) + H(+)(in). Its activity is regulated as follows. Regulated by a mechanism involving lumenal C-terminus region; a fine-tuned balance between photoprotective energy dissipation in high light and a maximum quantum yield in low light involves a reduced activity under high light. Functionally, electroneutral K(+)/H(+) efflux antiporter assuring proton efflux from the thylakoid lumen to the plastid stroma, thus increasing the membrane potential at the expense of the proton gradient (delta pH) component of the proton motive force (PMF). Promotes photosynthesis and growth in conditions where the chloroplast (cp)ATP synthase activity is low (e.g. cgl160 mutant background) by reducing the pH gradient across the thylakoid membrane. Accelerates photosynthetic acclimation in fluctuating light environments by modulating two components of the proton motive force, the proton gradient and the electric potential (delta Psi). Promotes the relaxation of photoprotective energy-dependent non-photochemical quenching (NPQ) after transitions from high to low light, thus enhancing photosystem II (PSII) quantum efficiency in fluctuating light. On transition from high to low light, slows down photoprotection by dissipating the pH gradient across the thylakoid membrane. During photosynthetic response on transition from dark to low light, involved in a sequential mechanism of adaptation; VCCN1 and CLCe first trigger the activation of photoprotection, which is later down-regulated by KEA3 to a low steady state, while adjusting electron transport. Together with the chloroplast NADH dehydrogenase-like (NDH) complex, maximizes photosynthesis efficiency after a long dark adaptation. Required in roots for rapid hyperosmotic-induced Ca(2+) responses and for osmo-sensory potentiation in hyperosmotic conditions. Low K(+)/H(+) efflux antiporter activity. Its function is as follows. Low K(+)/H(+) efflux antiporter activity. Promotes non-photochemical quenching (NPQ) in high light conditions. The protein is K(+) efflux antiporter 3, chloroplastic of Arabidopsis thaliana (Mouse-ear cress).